The chain runs to 335 residues: UPF0324 membrane protein LMOf2365_2179 (335 aa).

8 helical membrane passes run 10–28, 33–55, 91–113, 123–142, 155–177, 251–270, 277–299, and 309–331; these read TFWY…SYFL, FLMI…ALFP, AGWR…VYFL, LAIL…VVAI, VAAT…IYPI, VPWF…FGII, FLVI…NVHL, and PFAA…VLLF.

The protein belongs to the UPF0324 family.

The protein localises to the cell membrane. The chain is UPF0324 membrane protein LMOf2365_2179 from Listeria monocytogenes serotype 4b (strain F2365).